Consider the following 264-residue polypeptide: Thymidylate synthase (264 aa).

Residue Arg-21 coordinates dUMP. His-51 is a (6R)-5,10-methylene-5,6,7,8-tetrahydrofolate binding site. Residue 126–127 participates in dUMP binding; that stretch reads RR. The active-site Nucleophile is Cys-146. DUMP is bound by residues 166–169, Asn-177, and 207–209; these read RSVD and HLY. Residue Asp-169 participates in (6R)-5,10-methylene-5,6,7,8-tetrahydrofolate binding. Residue Ala-263 participates in (6R)-5,10-methylene-5,6,7,8-tetrahydrofolate binding.

It belongs to the thymidylate synthase family. Bacterial-type ThyA subfamily. In terms of assembly, homodimer.

The protein resides in the cytoplasm. It carries out the reaction dUMP + (6R)-5,10-methylene-5,6,7,8-tetrahydrofolate = 7,8-dihydrofolate + dTMP. It participates in pyrimidine metabolism; dTTP biosynthesis. Functionally, catalyzes the reductive methylation of 2'-deoxyuridine-5'-monophosphate (dUMP) to 2'-deoxythymidine-5'-monophosphate (dTMP) while utilizing 5,10-methylenetetrahydrofolate (mTHF) as the methyl donor and reductant in the reaction, yielding dihydrofolate (DHF) as a by-product. This enzymatic reaction provides an intracellular de novo source of dTMP, an essential precursor for DNA biosynthesis. This chain is Thymidylate synthase, found in Geobacillus thermodenitrificans (strain NG80-2).